The following is a 416-amino-acid chain: Peptide chain release factor subunit 1 (416 aa).

It belongs to the eukaryotic release factor 1 family. As to quaternary structure, heterodimer of two subunits, one of which binds GTP.

The protein resides in the cytoplasm. Its function is as follows. Directs the termination of nascent peptide synthesis (translation) in response to the termination codons UAA, UAG and UGA. The protein is Peptide chain release factor subunit 1 of Halobacterium salinarum (strain ATCC 29341 / DSM 671 / R1).